Consider the following 113-residue polypeptide: Nucleoid-associated protein SYNW0027 (113 aa).

This sequence belongs to the YbaB/EbfC family. Homodimer.

It is found in the cytoplasm. It localises to the nucleoid. In terms of biological role, binds to DNA and alters its conformation. May be involved in regulation of gene expression, nucleoid organization and DNA protection. This Parasynechococcus marenigrum (strain WH8102) protein is Nucleoid-associated protein SYNW0027.